Reading from the N-terminus, the 220-residue chain is Ribosomal RNA small subunit methyltransferase J (220 aa).

Residues 55-56 (RD), 71-72 (ER), and aspartate 123 contribute to the S-adenosyl-L-methionine site.

It belongs to the methyltransferase superfamily. RsmJ family.

It localises to the cytoplasm. It carries out the reaction guanosine(1516) in 16S rRNA + S-adenosyl-L-methionine = N(2)-methylguanosine(1516) in 16S rRNA + S-adenosyl-L-homocysteine + H(+). Its function is as follows. Specifically methylates the guanosine in position 1516 of 16S rRNA. This Rhodopseudomonas palustris (strain BisB5) protein is Ribosomal RNA small subunit methyltransferase J.